The chain runs to 58 residues: Weak neurotoxin D2B (58 aa).

3 cysteine pairs are disulfide-bonded: C3-C24, C17-C41, and C43-C54.

Expressed by the venom gland.

The protein resides in the secreted. In terms of biological role, binds to muscle nicotinic acetylcholine receptor (nAChR) and inhibit acetylcholine from binding to the receptor, thereby impairing neuromuscular transmission. The protein is Weak neurotoxin D2B of Micrurus pyrrhocryptus (Coral snake).